Here is a 607-residue protein sequence, read N- to C-terminus: Guanine nucleotide-binding protein-like 1 (607 aa).

Positions 1-14 (MPRKKPFSVKQKKK) are enriched in basic residues. Positions 1–81 (MPRKKPFSVK…GPRGYDPNRY (81 aa)) are disordered. Basic and acidic residues predominate over residues 15–26 (QLQDKRERKRGL). Phosphoserine is present on residues S32, S33, and S34. 2 positions are modified to phosphothreonine: T48 and T50. A phosphoserine mark is found at S51 and S68. Residues 178–418 (WRQLWRVLEM…LCDCPGLIFP (241 aa)) form the CP-type G domain. 225-228 (NKVD) serves as a coordination point for GTP. Phosphoserine is present on S324. GTP-binding positions include 367–374 (GFPNVGKS) and 411–415 (DCPGL). The segment at 547-607 (GPAGDEEEEE…PYALLGEDEC (61 aa)) is disordered. The span at 550-584 (GDEEEEEEEELSSSCEEEGEEDRDADEEGEGDEDT) shows a compositional bias: acidic residues. Phosphoserine occurs at positions 561, 562, and 563.

The protein belongs to the TRAFAC class YlqF/YawG GTPase family.

Functionally, possible regulatory or functional link with the histocompatibility cluster. The protein is Guanine nucleotide-binding protein-like 1 (GNL1) of Macaca fascicularis (Crab-eating macaque).